The chain runs to 335 residues: Ankyrin repeat and SOCS box protein 1 (335 aa).

6 ANK repeats span residues 36–68 (CEDT…RINE), 77–106 (LPCT…EVDL), 110–139 (KGQT…DPNG), 143–172 (HRST…DVDV), 191–220 (LVVC…NPDF), and 235–265 (SPGC…NLNL). An SOCS box domain is found at 286-335 (LQVFKEARSVPRTLLCLCRVAVRRALGKHRLHLIPSLPLPDPIKKFLLHE).

It belongs to the ankyrin SOCS box (ASB) family. Interacts with CUL5 and RNF7. Interacts with TAB2 and TAB3.

Its subcellular location is the cytoplasm. It functions in the pathway protein modification; protein ubiquitination. Its function is as follows. Probable substrate-recognition component of a SCF-like ECS (Elongin-Cullin-SOCS-box protein) E3 ligase complex which mediates the ubiquitination and subsequent proteasomal degradation of target proteins. Mediates Notch-induced ubiquitination and degradation of TCF3/E2A and JAK2. Functions as a tumor suppressor by enhancing CHCHD3 'Lys-48'-linked ubiquitination, leading to inhibition of the CHCHD3/ROS signaling pathway. Suppresses TAB2-linked 'Lys-48' polyubiquitination and consequently facilitates the initiation of NF-kappa-B and MAPK signaling cascades. May play a role in testis development. The polypeptide is Ankyrin repeat and SOCS box protein 1 (ASB1) (Homo sapiens (Human)).